A 377-amino-acid chain; its full sequence is Succinyl-diaminopimelate desuccinylase (377 aa).

His-67 is a binding site for Zn(2+). The active site involves Asp-69. Asp-100 contributes to the Zn(2+) binding site. Catalysis depends on Glu-134, which acts as the Proton acceptor. Positions 135, 163, and 349 each coordinate Zn(2+).

Belongs to the peptidase M20A family. DapE subfamily. Homodimer. Requires Zn(2+) as cofactor. The cofactor is Co(2+).

The catalysed reaction is N-succinyl-(2S,6S)-2,6-diaminopimelate + H2O = (2S,6S)-2,6-diaminopimelate + succinate. Its pathway is amino-acid biosynthesis; L-lysine biosynthesis via DAP pathway; LL-2,6-diaminopimelate from (S)-tetrahydrodipicolinate (succinylase route): step 3/3. Functionally, catalyzes the hydrolysis of N-succinyl-L,L-diaminopimelic acid (SDAP), forming succinate and LL-2,6-diaminopimelate (DAP), an intermediate involved in the bacterial biosynthesis of lysine and meso-diaminopimelic acid, an essential component of bacterial cell walls. The protein is Succinyl-diaminopimelate desuccinylase of Actinobacillus pleuropneumoniae serotype 3 (strain JL03).